The sequence spans 104 residues: Large ribosomal subunit protein uL24 (104 aa).

The protein belongs to the universal ribosomal protein uL24 family. As to quaternary structure, part of the 50S ribosomal subunit.

One of two assembly initiator proteins, it binds directly to the 5'-end of the 23S rRNA, where it nucleates assembly of the 50S subunit. Its function is as follows. One of the proteins that surrounds the polypeptide exit tunnel on the outside of the subunit. This is Large ribosomal subunit protein uL24 from Corynebacterium aurimucosum (strain ATCC 700975 / DSM 44827 / CIP 107346 / CN-1) (Corynebacterium nigricans).